Reading from the N-terminus, the 444-residue chain is Protein kinase C and casein kinase substrate in neurons protein 1 (444 aa).

Phosphoserine is present on residues serine 2 and serine 79. One can recognise an F-BAR domain in the interval 13 to 283; the sequence is EETTDSFWEV…AIRGADAQED (271 aa). Residues 26–275 adopt a coiled-coil conformation; it reads KRTVKRIDDG…HVYRELEQAI (250 aa). Disordered regions lie at residues 175–194 and 309–386; these read MNSK…LQDK and LPHT…DDSK. Threonine 184 is subject to Phosphothreonine. Positions 314 to 324 are enriched in basic and acidic residues; sequence TKKEKQPKKAE. Residues 329-351 are compositionally biased toward polar residues; sequence TNATGAVESTSQAGDRGSVSSYD. 5 positions are modified to phosphoserine: serine 346, serine 348, serine 349, serine 361, and serine 365. An SH3 domain is found at 385 to 444; that stretch reads SKGVRVRALYDYDGQEQDELSFKAGDELTKLGEEDEQGWCRGRLDSGQLGLYPANYVEAI. A Phosphotyrosine modification is found at tyrosine 394. Phosphoserine is present on residues serine 405 and serine 430.

It belongs to the PACSIN family. In terms of assembly, may form heterooligomers with other PACSINs. Interacts with MAPT. Interacts with TRPV4. Interacts (via SH3 domain) with SYNJ1 and WASL. Interacts with DNM2 and DNM3. Interacts with both COBL and DBNL. Identified in a complex composed of COBL, PACSIN1 and WASL. Interacts with EHD1 and EHD3. Homodimer. Interacts (via SH3 domain) with DNM1; the interaction is reduced by DNM1 phosphorylation. Phosphorylated by casein kinase 2 (CK2) and protein kinase C (PKC). Highly expressed in brain and, at much lower levels, in heart and pancreas.

The protein localises to the cytoplasm. Its subcellular location is the cell projection. It is found in the synapse. It localises to the synaptosome. The protein resides in the ruffle membrane. The protein localises to the membrane. Its subcellular location is the cytoplasmic vesicle membrane. It is found in the cytosol. It localises to the cell membrane. Functionally, plays a role in the reorganization of the microtubule cytoskeleton via its interaction with MAPT; this decreases microtubule stability and inhibits MAPT-induced microtubule polymerization. Plays a role in cellular transport processes by recruiting DNM1, DNM2 and DNM3 to membranes. Plays a role in the reorganization of the actin cytoskeleton and in neuron morphogenesis via its interaction with COBL and WASL, and by recruiting COBL to the cell cortex. Plays a role in the regulation of neurite formation, neurite branching and the regulation of neurite length. Required for normal synaptic vesicle endocytosis; this process retrieves previously released neurotransmitters to accommodate multiple cycles of neurotransmission. Required for normal excitatory and inhibitory synaptic transmission. Binds to membranes via its F-BAR domain and mediates membrane tubulation. This Homo sapiens (Human) protein is Protein kinase C and casein kinase substrate in neurons protein 1 (PACSIN1).